A 182-amino-acid polypeptide reads, in one-letter code: UPF0397 protein SPP_0507 (182 aa).

Transmembrane regions (helical) follow at residues 10 to 30, 46 to 66, 73 to 93, 109 to 129, and 148 to 168; these read VVAVGIGAALFVVIGMINIPT, LLSIIFGPIIGLLVGLIGHAI, YGLWWTWIIASGLFGLVVGLF, ILIFNLIQLLANALVWGVLAP, and IVAGIANGVSVAIAGTLLLLA.

This sequence belongs to the UPF0397 family.

The protein localises to the cell membrane. The chain is UPF0397 protein SPP_0507 from Streptococcus pneumoniae (strain P1031).